The primary structure comprises 458 residues: Riboflavin transporter 2 (458 aa).

The next 5 helical transmembrane spans lie at 11–31 (LFGM…PLIV), 38–58 (WYLP…PLFV), 73–93 (PVIY…AFFW), 97–117 (VPLA…LLSV), and 146–166 (GVSG…VVHC). N-linked (GlcNAc...) asparagine glycans are attached at residues asparagine 168, asparagine 176, asparagine 182, and asparagine 199. A helical membrane pass occupies residues 204 to 224 (VFFLFLSAMMVVCLAAFLLLN). The interval 249-274 (DQALSLSHRPQEEKPMISSPDSHRRA) is disordered. A run of 5 helical transmembrane segments spans residues 279-299 (FGTG…LAWV), 325-345 (LAAT…MFLP), 349-369 (LVLI…IMAM), 388-408 (IVIA…IIGV), and 417-437 (ALVW…LSMF).

This sequence belongs to the riboflavin transporter family.

The protein localises to the cell membrane. The catalysed reaction is riboflavin(in) = riboflavin(out). Functionally, plasma membrane transporter mediating the uptake by cells of the water soluble vitamin B2/riboflavin that plays a key role in biochemical oxidation-reduction reactions of the carbohydrate, lipid, and amino acid metabolism. This is Riboflavin transporter 2 (rft2) from Salmo salar (Atlantic salmon).